An 84-amino-acid chain; its full sequence is Envelope glycoprotein N (84 aa).

The first 26 residues, Met1–Ala26, serve as a signal peptide directing secretion. The Virion surface portion of the chain corresponds to Thr27–Leu45. Residues Asn46–Ile66 form a helical membrane-spanning segment. Topologically, residues Phe67 to Tyr84 are intravirion.

The protein belongs to the herpesviridae glycoprotein N family. In terms of assembly, interacts (via N-terminus) with gM (via N-terminus). The gM-gN heterodimer forms the gCII complex.

Its subcellular location is the virion membrane. It is found in the host membrane. The protein resides in the host Golgi apparatus. The protein localises to the host trans-Golgi network. Its function is as follows. Envelope glycoprotein necessary for proper maturation of gM and modulation of its membrane fusion activity. Also plays a critical role in virion morphogenesis. The polypeptide is Envelope glycoprotein N (Human herpesvirus 6B (strain Z29) (HHV-6 variant B)).